The sequence spans 1085 residues: Solute carrier family 12 member 4 (1085 aa).

The Cytoplasmic portion of the chain corresponds to 1–119; it reads MPHFTVVPVD…RRAAKAPSMG (119 aa). S24, S47, S51, S81, and S88 each carry phosphoserine. The interval 32–56 is disordered; that stretch reads AEREDSDGQGNHRENSPFLSPLDAS. The discontinuously helical transmembrane segment at 120 to 141 threads the bilayer; it reads TLMGVYLPCLQNIFGVILFLRL. 2 residues coordinate K(+): N131 and I132. The Extracellular segment spans residues 142 to 149; the sequence is TWMVGTAG. Residues 150–172 form a helical membrane-spanning segment; it reads VLQALLIVLICCCCTLLTAISMS. The Cytoplasmic portion of the chain corresponds to 173-196; sequence AIATNGVVPAGGSYFMISRSLGPE. Residues 197 to 225 traverse the membrane as a helical segment; it reads FGGAVGLCFYLGTTFAAAMYILGAIEILL. A K(+)-binding site is contributed by Y216. Residues 226–248 lie on the Extracellular side of the membrane; the sequence is TYIAPPAAIFYPSGTHDMSSATL. Transmembrane regions (helical) follow at residues 249-271 and 272-297; these read NNMR…VGVK and YVNK…GGIK. At 298-419 the chain is on the extracellular side; sequence SAFDPPVFPV…LYVVADIATS (122 aa). C308 and C323 are disulfide-bonded. N-linked (GlcNAc...) asparagine glycosylation is found at N312, N331, and N347. A disulfide bridge links C343 with C353. Residues 420-440 form a helical membrane-spanning segment; the sequence is FTVLVGIFFPSVTGIMAGSNR. P429 and T432 together coordinate K(+). Chloride-binding residues include G433, I434, and M435. Residues 441–450 lie on the Cytoplasmic side of the membrane; sequence SGDLRDAQKS. Residues 451 to 473 traverse the membrane as a helical segment; it reads IPVGTILAIVTTSLVYFSSVILF. Over 474–504 the chain is Extracellular; it reads GACIEGVVLRDKYGDGVSRNLVVGTLAWPSP. A helical transmembrane segment spans residues 505-531; that stretch reads WVIVVGSFFSTCGAGLQSLTGAPRLLQ. The Cytoplasmic segment spans residues 532-554; that stretch reads AIAKDNIIPFLRVFGHGKANGEP. Helical transmembrane passes span 555–575 and 576–598; these read TWAL…ASLD and MVAP…ACAV. Y589 lines the chloride pocket. The Cytoplasmic segment spans residues 599-612; sequence QTLLRTPNWRPRFK. 2 helical membrane passes run 613 to 635 and 636 to 651; these read YYHW…VSSW and YYAL…IYKY. Topologically, residues 652 to 1085 are cytoplasmic; that stretch reads IEYQGAEKEW…GGREVITIYS (434 aa). The scissor helix stretch occupies residues 665 to 681; sequence IRGLSLSAARYALLRLE. 5 residues coordinate ATP: L697, K699, K707, Y708, and V730. The residue at position 734 (S734) is a Phosphoserine. Residues G794, W795, and Y797 each coordinate ATP. Phosphoserine occurs at positions 916 and 967. T983 is modified (phosphothreonine). S1050 is subject to Phosphoserine.

The protein belongs to the SLC12A transporter family. K/Cl co-transporter subfamily. In terms of assembly, homodimer; adopts a domain-swap conformation at the scissor helices connecting the transmembrane domain and C-terminal domain. Heterodimer with other K-Cl cotransporters. In terms of processing, N-glycosylated. Phosphorylated, phosphorylation may regulate transporter activity. As to expression, ubiquitous.

It localises to the cell membrane. It carries out the reaction K(+)(in) + chloride(in) = K(+)(out) + chloride(out). With respect to regulation, inhibited by WNK3. Functionally, mediates electroneutral potassium-chloride cotransport when activated by cell swelling. May contribute to cell volume homeostasis in single cells. May be involved in the regulation of basolateral Cl(-) exit in NaCl absorbing epithelia. This is Solute carrier family 12 member 4 (Slc12a4) from Rattus norvegicus (Rat).